The following is a 233-amino-acid chain: MKNIMILSGAGLSAPSGLKTFRDNDGLWEEYDVMEVCSATGFRKNPKKVLDFYDARRVQLQNVKPNHAHEKIAQLKEKWGKNLFVITQNVDDLLERAGCKDVVHLHGFLPELRCLKCEGIFNIGYEKIIDKQCPKCKSKDLRHNIVMFEEQAPAYATLYSLLNQTSLFISIGTSGAVLPVGRYASMCEKSILNIYEKDANLERYFDKIYIEDIINAIDKIALDIENFMKDGNV.

Positions 1–230 constitute a Deacetylase sirtuin-type domain; sequence MKNIMILSGA…ALDIENFMKD (230 aa). 9 to 28 is a binding site for NAD(+); sequence GAGLSAPSGLKTFRDNDGLW. Tyrosine 53 and arginine 56 together coordinate substrate. 88–91 contacts NAD(+); the sequence is QNVD. Histidine 106 functions as the Proton acceptor in the catalytic mechanism. 4 residues coordinate Zn(2+): cysteine 114, cysteine 117, cysteine 133, and cysteine 136. Residues 172-174 and isoleucine 213 each bind NAD(+); that span reads GTS.

This sequence belongs to the sirtuin family. Class III subfamily. Zn(2+) serves as cofactor.

It localises to the cytoplasm. It carries out the reaction N(6)-acetyl-L-lysyl-[protein] + NAD(+) + H2O = 2''-O-acetyl-ADP-D-ribose + nicotinamide + L-lysyl-[protein]. It catalyses the reaction N(6)-succinyl-L-lysyl-[protein] + NAD(+) + H2O = 2''-O-succinyl-ADP-D-ribose + nicotinamide + L-lysyl-[protein]. In terms of biological role, NAD-dependent lysine deacetylase and desuccinylase that specifically removes acetyl and succinyl groups on target proteins. Modulates the activities of several proteins which are inactive in their acylated form. The chain is NAD-dependent protein deacylase from Campylobacter jejuni (strain RM1221).